The following is a 182-amino-acid chain: MDTIALFGGSFDPPHIGHEAIIEALKKFKDIDKIIIMPTFLNPFKSNFYAPSSLRVKWLREIFKEEKRVEVSDYEVLQNRQVPTIETAKHLLESYKKIYLVIGADNLAKLRDWNSYDELKELVTFVVATRDDIEIPDEFIMLSVDEKISSTQLRENIQLSKLPKKCAKEIYDFYKEEHCKTE.

Belongs to the NadD family.

The enzyme catalyses nicotinate beta-D-ribonucleotide + ATP + H(+) = deamido-NAD(+) + diphosphate. The protein operates within cofactor biosynthesis; NAD(+) biosynthesis; deamido-NAD(+) from nicotinate D-ribonucleotide: step 1/1. Functionally, catalyzes the reversible adenylation of nicotinate mononucleotide (NaMN) to nicotinic acid adenine dinucleotide (NaAD). In Sulfurimonas denitrificans (strain ATCC 33889 / DSM 1251) (Thiomicrospira denitrificans (strain ATCC 33889 / DSM 1251)), this protein is Probable nicotinate-nucleotide adenylyltransferase.